A 23-amino-acid polypeptide reads, in one-letter code: Maculatin-1.2 (23 aa).

The residue at position 23 (Ala23) is an Alanine amide.

In terms of tissue distribution, expressed by the skin dorsal glands.

It is found in the secreted. In terms of biological role, shows antibacterial activity against S.aureus and S.uberis. The polypeptide is Maculatin-1.2 (Ranoidea genimaculata (Brown-spotted tree frog)).